A 138-amino-acid chain; its full sequence is Large ribosomal subunit protein uL16 (138 aa).

Residues Met-1 to Gln-13 are compositionally biased toward basic residues. Residues Met-1–Ala-21 are disordered.

It belongs to the universal ribosomal protein uL16 family. In terms of assembly, part of the 50S ribosomal subunit.

Binds 23S rRNA and is also seen to make contacts with the A and possibly P site tRNAs. The sequence is that of Large ribosomal subunit protein uL16 from Albidiferax ferrireducens (strain ATCC BAA-621 / DSM 15236 / T118) (Rhodoferax ferrireducens).